The sequence spans 129 residues: Small ribosomal subunit protein uS11 (129 aa).

The protein belongs to the universal ribosomal protein uS11 family. As to quaternary structure, part of the 30S ribosomal subunit. Interacts with proteins S7 and S18. Binds to IF-3.

Its function is as follows. Located on the platform of the 30S subunit, it bridges several disparate RNA helices of the 16S rRNA. Forms part of the Shine-Dalgarno cleft in the 70S ribosome. The polypeptide is Small ribosomal subunit protein uS11 (Buchnera aphidicola subsp. Baizongia pistaciae (strain Bp)).